The primary structure comprises 347 residues: S-adenosylmethionine:tRNA ribosyltransferase-isomerase (347 aa).

It belongs to the QueA family. In terms of assembly, monomer.

Its subcellular location is the cytoplasm. The catalysed reaction is 7-aminomethyl-7-carbaguanosine(34) in tRNA + S-adenosyl-L-methionine = epoxyqueuosine(34) in tRNA + adenine + L-methionine + 2 H(+). Its pathway is tRNA modification; tRNA-queuosine biosynthesis. Functionally, transfers and isomerizes the ribose moiety from AdoMet to the 7-aminomethyl group of 7-deazaguanine (preQ1-tRNA) to give epoxyqueuosine (oQ-tRNA). This Treponema denticola (strain ATCC 35405 / DSM 14222 / CIP 103919 / JCM 8153 / KCTC 15104) protein is S-adenosylmethionine:tRNA ribosyltransferase-isomerase.